Consider the following 313-residue polypeptide: Porphobilinogen deaminase (313 aa).

Cys-242 is subject to S-(dipyrrolylmethanemethyl)cysteine.

The protein belongs to the HMBS family. In terms of assembly, monomer. The cofactor is dipyrromethane.

The catalysed reaction is 4 porphobilinogen + H2O = hydroxymethylbilane + 4 NH4(+). The protein operates within porphyrin-containing compound metabolism; protoporphyrin-IX biosynthesis; coproporphyrinogen-III from 5-aminolevulinate: step 2/4. In terms of biological role, tetrapolymerization of the monopyrrole PBG into the hydroxymethylbilane pre-uroporphyrinogen in several discrete steps. The protein is Porphobilinogen deaminase of Escherichia coli O45:K1 (strain S88 / ExPEC).